A 415-amino-acid polypeptide reads, in one-letter code: Acrosin (415 aa).

The first 16 residues, 1–16 (MLPTAVLLVLAVSVAA), serve as a signal peptide directing secretion. An N-linked (GlcNAc...) asparagine glycan is attached at Asn19. 6 disulfide bridges follow: Cys22–Cys152, Cys26–Cys160, Cys71–Cys87, Cys175–Cys244, Cys207–Cys223, and Cys234–Cys264. The 249-residue stretch at 40 to 288 (VVGGMSAEPG…YLNWIASKIG (249 aa)) folds into the Peptidase S1 domain. Catalysis depends on charge relay system residues His86 and Asp140. Asn208 carries an N-linked (GlcNAc...) asparagine glycan. Ser238 serves as the catalytic Charge relay system. 2 disordered regions span residues 296–376 (QLGT…PPQA) and 395–415 (FSSG…LPAS). Pro residues-rich tracts occupy residues 300–312 (PPRP…PVRP) and 328–367 (PPGP…PPPQ). Residues 339–415 (PRPPAPPPAP…TTDLQELPAS (77 aa)) constitute a propeptide, pro-rich. A compositionally biased stretch (polar residues) spans 395–409 (FSSGRSYYETETTDL).

It belongs to the peptidase S1 family. In terms of assembly, heavy chain (catalytic) and a light chain linked by two disulfide bonds. Forms a heterodimer with SERPINA5.

It catalyses the reaction Preferential cleavage: Arg-|-Xaa, Lys-|-Xaa.. With respect to regulation, inhibited by SERPINA5. In terms of biological role, acrosin is the major protease of mammalian spermatozoa. It is a serine protease of trypsin-like cleavage specificity, it is synthesized in a zymogen form, proacrosin and stored in the acrosome. This Sus scrofa (Pig) protein is Acrosin (ACR).